The chain runs to 382 residues: Mannitol-1-phosphate 5-dehydrogenase (382 aa).

3-14 lines the NAD(+) pocket; it reads ALHFGAGNIGRG.

This sequence belongs to the mannitol dehydrogenase family.

The enzyme catalyses D-mannitol 1-phosphate + NAD(+) = beta-D-fructose 6-phosphate + NADH + H(+). In Salmonella dublin (strain CT_02021853), this protein is Mannitol-1-phosphate 5-dehydrogenase.